Reading from the N-terminus, the 305-residue chain is Olfactory receptor 4B13 (305 aa).

Topologically, residues 1-25 (MANKNNVTELIFTGLFQDPEVQKVC) are extracellular. Asparagine 6 is a glycosylation site (N-linked (GlcNAc...) asparagine). Residues 26 to 46 (FVLFLPVYLATLLGNSLILVA) traverse the membrane as a helical segment. The Cytoplasmic segment spans residues 47–55 (VSISKTLHS). Residues 56–76 (PMYFFLSSLSLVEICYSSTIV) traverse the membrane as a helical segment. Residues 77–95 (PKFITDLLAKVKTISLKGC) are Extracellular-facing. A disulfide bridge links cysteine 95 with cysteine 187. A helical membrane pass occupies residues 96–116 (LTQIFFSHFFGVVEVILLVVM). At 117–141 (AYDRYVAICKPLHYMNIMSRQVCHM) the chain is on the cytoplasmic side. Residues 142–162 (LVAGSWLGGFIHSIIQIIITI) form a helical membrane-spanning segment. The Extracellular segment spans residues 163-202 (PLPFCGPNVIDHYFCDLQQLFKLACTDTFMEGFIVMANSG). Residues 203–223 (LISIVSLFILVSSYAVILISL) traverse the membrane as a helical segment. Over 224 to 236 (RKRSAEGRRKALS) the chain is Cytoplasmic. Residues 237-257 (TCASHITVVILFFVPGAFIYM) form a helical membrane-spanning segment. Residues 258–266 (RPSSTFTED) are Extracellular-facing. Residues 267–287 (KLVSVFYTVITPMLNPIVYTL) form a helical membrane-spanning segment. The Cytoplasmic portion of the chain corresponds to 288-305 (RNTEMKNAIRMSWKQKDS).

This sequence belongs to the G-protein coupled receptor 1 family.

The protein localises to the cell membrane. In terms of biological role, odorant receptor. The chain is Olfactory receptor 4B13 from Mus musculus (Mouse).